Here is a 377-residue protein sequence, read N- to C-terminus: D-alanine--D-alanine ligase (377 aa).

The ATP-grasp domain occupies 140 to 349 (KELLTVNGIR…NAKLVDMLID (210 aa)). Residue 170–225 (VAELGNIVFVKAANQGSSVGISRVTNAEEYTEALSDSFQYDYKVLIEEAVNGAREL) participates in ATP binding. The Mg(2+) site is built by Asp303, Glu316, and Asn318.

The protein belongs to the D-alanine--D-alanine ligase family. Mg(2+) is required as a cofactor. Requires Mn(2+) as cofactor.

It localises to the cytoplasm. The catalysed reaction is 2 D-alanine + ATP = D-alanyl-D-alanine + ADP + phosphate + H(+). The protein operates within cell wall biogenesis; peptidoglycan biosynthesis. In terms of biological role, cell wall formation. The protein is D-alanine--D-alanine ligase of Leuconostoc mesenteroides.